Here is a 206-residue protein sequence, read N- to C-terminus: Ribosomal RNA small subunit methyltransferase G (206 aa).

Residues glycine 71, phenylalanine 76, 122–123 (AE), and arginine 135 each bind S-adenosyl-L-methionine.

Belongs to the methyltransferase superfamily. RNA methyltransferase RsmG family.

It localises to the cytoplasm. Its function is as follows. Specifically methylates the N7 position of a guanine in 16S rRNA. The sequence is that of Ribosomal RNA small subunit methyltransferase G from Bacteroides thetaiotaomicron (strain ATCC 29148 / DSM 2079 / JCM 5827 / CCUG 10774 / NCTC 10582 / VPI-5482 / E50).